Consider the following 137-residue polypeptide: ATP synthase epsilon chain (137 aa).

This sequence belongs to the ATPase epsilon chain family. F-type ATPases have 2 components, CF(1) - the catalytic core - and CF(0) - the membrane proton channel. CF(1) has five subunits: alpha(3), beta(3), gamma(1), delta(1), epsilon(1). CF(0) has three main subunits: a, b and c.

The protein localises to the cell membrane. Functionally, produces ATP from ADP in the presence of a proton gradient across the membrane. The protein is ATP synthase epsilon chain of Syntrophomonas wolfei subsp. wolfei (strain DSM 2245B / Goettingen).